A 561-amino-acid polypeptide reads, in one-letter code: Arginine--tRNA ligase (561 aa).

The short motif at 136-146 is the 'HIGH' region element; that stretch reads ANPTGLLHMGN.

This sequence belongs to the class-I aminoacyl-tRNA synthetase family. In terms of assembly, monomer.

Its subcellular location is the cytoplasm. The enzyme catalyses tRNA(Arg) + L-arginine + ATP = L-arginyl-tRNA(Arg) + AMP + diphosphate. The chain is Arginine--tRNA ligase from Desulforamulus reducens (strain ATCC BAA-1160 / DSM 100696 / MI-1) (Desulfotomaculum reducens).